Consider the following 445-residue polypeptide: Argininosuccinate synthase (445 aa).

ATP-binding positions include 17 to 25 (AFSGGLDTS) and alanine 43. Residue tyrosine 99 coordinates L-citrulline. Positions 129 and 131 each coordinate ATP. Residues threonine 131, asparagine 135, and aspartate 136 each contribute to the L-aspartate site. Residue asparagine 135 coordinates L-citrulline. Residue aspartate 136 participates in ATP binding. 2 residues coordinate L-citrulline: arginine 139 and serine 192. ATP is bound at residue aspartate 194. L-citrulline-binding residues include threonine 201, glutamate 203, and glutamate 280.

It belongs to the argininosuccinate synthase family. Type 2 subfamily. In terms of assembly, homotetramer.

It localises to the cytoplasm. The enzyme catalyses L-citrulline + L-aspartate + ATP = 2-(N(omega)-L-arginino)succinate + AMP + diphosphate + H(+). Its pathway is amino-acid biosynthesis; L-arginine biosynthesis; L-arginine from L-ornithine and carbamoyl phosphate: step 2/3. In Bordetella petrii (strain ATCC BAA-461 / DSM 12804 / CCUG 43448), this protein is Argininosuccinate synthase.